The chain runs to 245 residues: Carboxymethylenebutenolidase homolog (245 aa).

Position 2 is an N-acetylalanine (Ala2). Residue Lys36 is modified to N6-acetyllysine. Catalysis depends on residues Cys132, Asp179, and His212. Ser223 is subject to Phosphoserine.

The protein belongs to the dienelactone hydrolase family.

It localises to the cytoplasm. It is found in the cytosol. Its function is as follows. Cysteine hydrolase. This is Carboxymethylenebutenolidase homolog (CMBL) from Pongo abelii (Sumatran orangutan).